The chain runs to 421 residues: 4-hydroxy-3-methylbut-2-en-1-yl diphosphate synthase (flavodoxin) (421 aa).

The [4Fe-4S] cluster site is built by cysteine 298, cysteine 301, cysteine 344, and glutamate 351.

It belongs to the IspG family. [4Fe-4S] cluster serves as cofactor.

The enzyme catalyses (2E)-4-hydroxy-3-methylbut-2-enyl diphosphate + oxidized [flavodoxin] + H2O + 2 H(+) = 2-C-methyl-D-erythritol 2,4-cyclic diphosphate + reduced [flavodoxin]. The protein operates within isoprenoid biosynthesis; isopentenyl diphosphate biosynthesis via DXP pathway; isopentenyl diphosphate from 1-deoxy-D-xylulose 5-phosphate: step 5/6. Functionally, converts 2C-methyl-D-erythritol 2,4-cyclodiphosphate (ME-2,4cPP) into 1-hydroxy-2-methyl-2-(E)-butenyl 4-diphosphate. The protein is 4-hydroxy-3-methylbut-2-en-1-yl diphosphate synthase (flavodoxin) of Neisseria meningitidis serogroup C / serotype 2a (strain ATCC 700532 / DSM 15464 / FAM18).